The following is a 162-amino-acid chain: Phosphopantetheine adenylyltransferase (162 aa).

Residue Thr-10 coordinates substrate. ATP contacts are provided by residues 10-11 (TF) and His-18. Positions 42, 74, and 88 each coordinate substrate. ATP is bound by residues 89–91 (GLR), Glu-99, and 124–130 (FSCISST).

It belongs to the bacterial CoaD family. In terms of assembly, homohexamer. Mg(2+) serves as cofactor.

Its subcellular location is the cytoplasm. The catalysed reaction is (R)-4'-phosphopantetheine + ATP + H(+) = 3'-dephospho-CoA + diphosphate. It functions in the pathway cofactor biosynthesis; coenzyme A biosynthesis; CoA from (R)-pantothenate: step 4/5. Reversibly transfers an adenylyl group from ATP to 4'-phosphopantetheine, yielding dephospho-CoA (dPCoA) and pyrophosphate. This chain is Phosphopantetheine adenylyltransferase, found in Francisella philomiragia subsp. philomiragia (strain ATCC 25017 / CCUG 19701 / FSC 153 / O#319-036).